A 122-amino-acid polypeptide reads, in one-letter code: MIKKESRNERRIRRHRRVRKKVFGTPERPRLCVFRSNKHIYAQIIDDTIGHTLVSASTLDPELREKLQKTWNIEAAKEVGLLIGKRAIEKGIKKVVFDRGGYKYHGRVKALADGAREAGLEF.

Belongs to the universal ribosomal protein uL18 family. Part of the 50S ribosomal subunit; part of the 5S rRNA/L5/L18/L25 subcomplex. Contacts the 5S and 23S rRNAs.

This is one of the proteins that bind and probably mediate the attachment of the 5S RNA into the large ribosomal subunit, where it forms part of the central protuberance. The chain is Large ribosomal subunit protein uL18 from Thermotoga neapolitana (strain ATCC 49049 / DSM 4359 / NBRC 107923 / NS-E).